Reading from the N-terminus, the 301-residue chain is Prohibitin-2 (301 aa).

2 necessary for transcriptional repression regions span residues 19–49 (MGTA…GHRA) and 150–174 (ASQL…RAKD). Residues 191-237 (REYTAAVESKQVAQQEAQRAQFLVEKAKQDQKQKIVQAEGEAAAAKM) adopt a coiled-coil conformation.

The protein belongs to the prohibitin family. In terms of assembly, the mitochondrial prohibitin complex consists of two subunits (PHB1 and PHB2), assembled into a membrane-associated ring-shaped supercomplex of approximately 1 mDa.

The protein resides in the mitochondrion inner membrane. The protein localises to the cytoplasm. It is found in the nucleus. It localises to the cell membrane. Protein with pleiotropic attributes mediated in a cell-compartment- and tissue-specific manner, which include the plasma membrane-associated cell signaling functions, mitochondrial chaperone, and transcriptional co-regulator of transcription factors and sex steroid hormones in the nucleus. Its function is as follows. In the mitochondria, together with PHB, forms large ring complexes (prohibitin complexes) in the inner mitochondrial membrane (IMM) and functions as a chaperone protein that stabilizes mitochondrial respiratory enzymes and maintains mitochondrial integrity in the IMM, which is required for mitochondrial morphogenesis, neuronal survival, and normal lifespan. In terms of biological role, in the nucleus, serves as transcriptional co-regulator. This is Prohibitin-2 (phb2) from Xenopus tropicalis (Western clawed frog).